Reading from the N-terminus, the 271-residue chain is Putative phosphoenolpyruvate synthase regulatory protein (271 aa).

151–158 (GVSRSGKT) is an ADP binding site.

Belongs to the pyruvate, phosphate/water dikinase regulatory protein family. PSRP subfamily.

It carries out the reaction [pyruvate, water dikinase] + ADP = [pyruvate, water dikinase]-phosphate + AMP + H(+). It catalyses the reaction [pyruvate, water dikinase]-phosphate + phosphate + H(+) = [pyruvate, water dikinase] + diphosphate. Its function is as follows. Bifunctional serine/threonine kinase and phosphorylase involved in the regulation of the phosphoenolpyruvate synthase (PEPS) by catalyzing its phosphorylation/dephosphorylation. The sequence is that of Putative phosphoenolpyruvate synthase regulatory protein from Burkholderia multivorans (strain ATCC 17616 / 249).